Here is a 71-residue protein sequence, read N- to C-terminus: Translation initiation factor IF-1 (71 aa).

The S1-like domain occupies 1 to 71; that stretch reads MAKQAAIEQD…LTKARITYRY (71 aa).

It belongs to the IF-1 family. As to quaternary structure, component of the 30S ribosomal translation pre-initiation complex which assembles on the 30S ribosome in the order IF-2 and IF-3, IF-1 and N-formylmethionyl-tRNA(fMet); mRNA recruitment can occur at any time during PIC assembly.

The protein resides in the cytoplasm. In terms of biological role, one of the essential components for the initiation of protein synthesis. Stabilizes the binding of IF-2 and IF-3 on the 30S subunit to which N-formylmethionyl-tRNA(fMet) subsequently binds. Helps modulate mRNA selection, yielding the 30S pre-initiation complex (PIC). Upon addition of the 50S ribosomal subunit IF-1, IF-2 and IF-3 are released leaving the mature 70S translation initiation complex. In Christiangramia forsetii (strain DSM 17595 / CGMCC 1.15422 / KT0803) (Gramella forsetii), this protein is Translation initiation factor IF-1.